A 739-amino-acid polypeptide reads, in one-letter code: NAD(P)H-quinone oxidoreductase subunit 5, chloroplastic (739 aa).

The next 16 helical transmembrane spans lie at 9 to 29 (LIIP…LIFF), 40 to 60 (WAFP…NLSI), 89 to 109 (IDSL…LVLI), 125 to 145 (FAYM…SNLI), 147 to 167 (IHIF…FWFT), 185 to 205 (GDFG…SFEF), 224 to 244 (LFVI…SAQF), 258 to 278 (TPIS…FLVA), 283 to 303 (LFTV…ITIL), 327 to 347 (LGYI…FHLI), 354 to 374 (ALLF…VGYS), 396 to 416 (TAFF…CFWS), 425 to 445 (WLYS…TAFY), 546 to 566 (LFPL…GIPF), 605 to 625 (IFSV…YRPI), and 718 to 738 (ISSY…IFQV).

Belongs to the complex I subunit 5 family. NDH is composed of at least 16 different subunits, 5 of which are encoded in the nucleus.

Its subcellular location is the plastid. The protein localises to the chloroplast thylakoid membrane. The catalysed reaction is a plastoquinone + NADH + (n+1) H(+)(in) = a plastoquinol + NAD(+) + n H(+)(out). The enzyme catalyses a plastoquinone + NADPH + (n+1) H(+)(in) = a plastoquinol + NADP(+) + n H(+)(out). NDH shuttles electrons from NAD(P)H:plastoquinone, via FMN and iron-sulfur (Fe-S) centers, to quinones in the photosynthetic chain and possibly in a chloroplast respiratory chain. The immediate electron acceptor for the enzyme in this species is believed to be plastoquinone. Couples the redox reaction to proton translocation, and thus conserves the redox energy in a proton gradient. This Buxus microphylla (Littleleaf boxwood) protein is NAD(P)H-quinone oxidoreductase subunit 5, chloroplastic (ndhF).